The sequence spans 537 residues: CTP synthase (537 aa).

The tract at residues 1 to 267 (MTNTKFVFVT…ISVLEERLFG (267 aa)) is amidoligase domain. Ser15 serves as a coordination point for CTP. Ser15 contributes to the UTP binding site. 16-21 (SVGKGI) contributes to the ATP binding site. Residue Tyr56 coordinates L-glutamine. Asp73 serves as a coordination point for ATP. Positions 73 and 141 each coordinate Mg(2+). Residues 148–150 (DIE), 188–193 (KTKPTQ), and Lys224 contribute to the CTP site. Residues 188–193 (KTKPTQ) and Lys224 each bind UTP. A Glutamine amidotransferase type-1 domain is found at 297 to 535 (YVVLPDAYLS…LSEAVAKASP (239 aa)). Residue Gly355 participates in L-glutamine binding. The active-site Nucleophile; for glutamine hydrolysis is the Cys382. L-glutamine contacts are provided by residues 383–386 (LGMQ), Glu406, and Arg463. Residues His508 and Glu510 contribute to the active site.

It belongs to the CTP synthase family. Homotetramer.

It carries out the reaction UTP + L-glutamine + ATP + H2O = CTP + L-glutamate + ADP + phosphate + 2 H(+). The enzyme catalyses L-glutamine + H2O = L-glutamate + NH4(+). The catalysed reaction is UTP + NH4(+) + ATP = CTP + ADP + phosphate + 2 H(+). Its pathway is pyrimidine metabolism; CTP biosynthesis via de novo pathway; CTP from UDP: step 2/2. Allosterically activated by GTP, when glutamine is the substrate; GTP has no effect on the reaction when ammonia is the substrate. The allosteric effector GTP functions by stabilizing the protein conformation that binds the tetrahedral intermediate(s) formed during glutamine hydrolysis. Inhibited by the product CTP, via allosteric rather than competitive inhibition. Functionally, catalyzes the ATP-dependent amination of UTP to CTP with either L-glutamine or ammonia as the source of nitrogen. Regulates intracellular CTP levels through interactions with the four ribonucleotide triphosphates. This is CTP synthase from Coprothermobacter proteolyticus (strain ATCC 35245 / DSM 5265 / OCM 4 / BT).